The following is a 104-amino-acid chain: Large ribosomal subunit protein eL36 (104 aa).

Belongs to the eukaryotic ribosomal protein eL36 family.

The polypeptide is Large ribosomal subunit protein eL36 (RPL36) (Tetrahymena thermophila (strain SB210)).